The following is a 200-amino-acid chain: Probable molybdenum cofactor guanylyltransferase (200 aa).

Residues 8–10, lysine 20, aspartate 66, and aspartate 97 each bind GTP; that span reads LAG. Position 97 (aspartate 97) interacts with Mg(2+).

Belongs to the MobA family. The cofactor is Mg(2+).

The protein resides in the cytoplasm. It catalyses the reaction Mo-molybdopterin + GTP + H(+) = Mo-molybdopterin guanine dinucleotide + diphosphate. In terms of biological role, transfers a GMP moiety from GTP to Mo-molybdopterin (Mo-MPT) cofactor (Moco or molybdenum cofactor) to form Mo-molybdopterin guanine dinucleotide (Mo-MGD) cofactor. The polypeptide is Probable molybdenum cofactor guanylyltransferase (Bacillus velezensis (strain DSM 23117 / BGSC 10A6 / LMG 26770 / FZB42) (Bacillus amyloliquefaciens subsp. plantarum)).